A 78-amino-acid chain; its full sequence is Probable [Fe-S]-dependent transcriptional repressor (78 aa).

Residues C56, C61, C64, and C70 each coordinate iron-sulfur cluster.

This sequence belongs to the FeoC family.

May function as a transcriptional regulator that controls feoABC expression. The protein is Probable [Fe-S]-dependent transcriptional repressor of Salmonella heidelberg (strain SL476).